A 454-amino-acid polypeptide reads, in one-letter code: Macrophage scavenger receptor types I and II (454 aa).

Positions 1 to 22 (MAQWDSFTDQQEDTDSCSESVK) are disordered. Residues 1 to 50 (MAQWDSFTDQQEDTDSCSESVKFDARSNTALLPPNPKNGPPLQEKLKSFK) are Cytoplasmic-facing. Ser27 bears the Phosphoserine mark. Residues 51–73 (AALIALYLLVFAVLIPIIAIMAA) traverse the membrane as a helical; Signal-anchor for type II membrane protein segment. The tract at residues 74–109 (QLLKWEMKNCTVGSINANSVSSSLLGRGNDSEHEVR) is spacer. At 74 to 454 (QLLKWEMKNC…GEDAGVTCTL (381 aa)) the chain is on the extracellular side. 7 N-linked (GlcNAc...) asparagine glycosylation sites follow: Asn82, Asn102, Asn143, Asn184, Asn221, Asn249, and Asn267. Positions 199 to 256 (VKFQENTLKGQEEISKLKERVHNASAEIMSMKEEQVHLEQEIKREVKVLNNITNDLRL) form a coiled coil. The disordered stretch occupies residues 267–347 (NITLIQGPPG…KGEKGSGSIL (81 aa)). The region spanning 273 to 344 (GPPGPPGEKG…KGQKGEKGSG (72 aa)) is the Collagen-like domain. One can recognise an SRCR domain in the interval 353–453 (VRLVGGRGPH…HGEDAGVTCT (101 aa)). 3 cysteine pairs are disulfide-bonded: Cys378-Cys442, Cys391-Cys452, and Cys422-Cys432.

As to quaternary structure, homotrimer. Interacts with MYO18A.

It is found in the membrane. Membrane glycoproteins implicated in the pathologic deposition of cholesterol in arterial walls during atherogenesis. Two types of receptor subunits exist. These receptors mediate the endocytosis of a diverse group of macromolecules, including modified low density lipoproteins (LDL). The chain is Macrophage scavenger receptor types I and II (MSR1) from Oryctolagus cuniculus (Rabbit).